Consider the following 134-residue polypeptide: Fluoride-specific ion channel FluC 3 (134 aa).

Helical transmembrane passes span Leu4 to Leu24, Met35 to Phe55, Met67 to Val87, and Ile100 to Ile120. Residues Gly74 and Ser77 each contribute to the Na(+) site.

The protein belongs to the fluoride channel Fluc/FEX (TC 1.A.43) family.

It is found in the cell inner membrane. The enzyme catalyses fluoride(in) = fluoride(out). With respect to regulation, na(+) is not transported, but it plays an essential structural role and its presence is essential for fluoride channel function. Its function is as follows. Fluoride-specific ion channel. Important for reducing fluoride concentration in the cell, thus reducing its toxicity. The polypeptide is Fluoride-specific ion channel FluC 3 (Yersinia pseudotuberculosis serotype I (strain IP32953)).